Reading from the N-terminus, the 204-residue chain is Ribonuclease HII (204 aa).

Residues Met-1 to Leu-197 enclose the RNase H type-2 domain. Residues Asp-6, Glu-7, and Asp-103 each coordinate a divalent metal cation.

Belongs to the RNase HII family. Requires Mn(2+) as cofactor. It depends on Mg(2+) as a cofactor.

It localises to the cytoplasm. The catalysed reaction is Endonucleolytic cleavage to 5'-phosphomonoester.. Functionally, endonuclease that specifically degrades the RNA of RNA-DNA hybrids. This Helicobacter pylori (strain P12) protein is Ribonuclease HII.